The chain runs to 345 residues: Probable dual-specificity RNA methyltransferase RlmN (345 aa).

Residue Glu-93 is the Proton acceptor of the active site. The Radical SAM core domain maps to 99 to 326 (DDERATLCIS…TTIRASRGED (228 aa)). An intrachain disulfide couples Cys-106 to Cys-331. The [4Fe-4S] cluster site is built by Cys-113, Cys-117, and Cys-120. S-adenosyl-L-methionine-binding positions include 158–159 (GE), Ser-190, 212–214 (SLH), and His-288. Residue Cys-331 is the S-methylcysteine intermediate of the active site.

The protein belongs to the radical SAM superfamily. RlmN family. Requires [4Fe-4S] cluster as cofactor.

It is found in the cytoplasm. The enzyme catalyses adenosine(2503) in 23S rRNA + 2 reduced [2Fe-2S]-[ferredoxin] + 2 S-adenosyl-L-methionine = 2-methyladenosine(2503) in 23S rRNA + 5'-deoxyadenosine + L-methionine + 2 oxidized [2Fe-2S]-[ferredoxin] + S-adenosyl-L-homocysteine. It carries out the reaction adenosine(37) in tRNA + 2 reduced [2Fe-2S]-[ferredoxin] + 2 S-adenosyl-L-methionine = 2-methyladenosine(37) in tRNA + 5'-deoxyadenosine + L-methionine + 2 oxidized [2Fe-2S]-[ferredoxin] + S-adenosyl-L-homocysteine. Specifically methylates position 2 of adenine 2503 in 23S rRNA and position 2 of adenine 37 in tRNAs. The sequence is that of Probable dual-specificity RNA methyltransferase RlmN from Bacteroides thetaiotaomicron (strain ATCC 29148 / DSM 2079 / JCM 5827 / CCUG 10774 / NCTC 10582 / VPI-5482 / E50).